Reading from the N-terminus, the 187-residue chain is Elongation factor P (187 aa).

It belongs to the elongation factor P family.

It localises to the cytoplasm. It functions in the pathway protein biosynthesis; polypeptide chain elongation. In terms of biological role, involved in peptide bond synthesis. Stimulates efficient translation and peptide-bond synthesis on native or reconstituted 70S ribosomes in vitro. Probably functions indirectly by altering the affinity of the ribosome for aminoacyl-tRNA, thus increasing their reactivity as acceptors for peptidyl transferase. The polypeptide is Elongation factor P (Prochlorococcus marinus (strain NATL2A)).